The sequence spans 388 residues: 4-hydroxy-3-methylbut-2-en-1-yl diphosphate synthase (flavodoxin) (388 aa).

Residues cysteine 281, cysteine 284, cysteine 316, and glutamate 323 each coordinate [4Fe-4S] cluster.

It belongs to the IspG family. It depends on [4Fe-4S] cluster as a cofactor.

It catalyses the reaction (2E)-4-hydroxy-3-methylbut-2-enyl diphosphate + oxidized [flavodoxin] + H2O + 2 H(+) = 2-C-methyl-D-erythritol 2,4-cyclic diphosphate + reduced [flavodoxin]. It functions in the pathway isoprenoid biosynthesis; isopentenyl diphosphate biosynthesis via DXP pathway; isopentenyl diphosphate from 1-deoxy-D-xylulose 5-phosphate: step 5/6. Converts 2C-methyl-D-erythritol 2,4-cyclodiphosphate (ME-2,4cPP) into 1-hydroxy-2-methyl-2-(E)-butenyl 4-diphosphate. This is 4-hydroxy-3-methylbut-2-en-1-yl diphosphate synthase (flavodoxin) from Arthrobacter sp. (strain FB24).